The sequence spans 287 residues: UPF0276 protein ACIAD0933 (287 aa).

The protein belongs to the UPF0276 family.

This is UPF0276 protein ACIAD0933 from Acinetobacter baylyi (strain ATCC 33305 / BD413 / ADP1).